Consider the following 98-residue polypeptide: Putative defensin-like protein 239 (98 aa).

The N-terminal stretch at 1-23 (MRYTTSFIGLCFLIFLLKNLVNG) is a signal peptide. 4 disulfide bridges follow: Cys29–Cys89, Cys39–Cys69, Cys47–Cys86, and Cys67–Cys88.

It belongs to the DEFL family.

The protein resides in the secreted. The protein is Putative defensin-like protein 239 (SCRL17) of Arabidopsis thaliana (Mouse-ear cress).